A 424-amino-acid polypeptide reads, in one-letter code: 3-phosphoshikimate 1-carboxyvinyltransferase (424 aa).

The 3-phosphoshikimate site is built by Lys21, Ser22, and Arg26. Lys21 lines the phosphoenolpyruvate pocket. 2 residues coordinate phosphoenolpyruvate: Gly91 and Arg119. Residues Ser164, Gln166, Asp310, and Lys337 each contribute to the 3-phosphoshikimate site. Gln166 is a phosphoenolpyruvate binding site. Asp310 acts as the Proton acceptor in catalysis. Phosphoenolpyruvate contacts are provided by Arg341 and Arg382.

Belongs to the EPSP synthase family. In terms of assembly, monomer.

The protein localises to the cytoplasm. It catalyses the reaction 3-phosphoshikimate + phosphoenolpyruvate = 5-O-(1-carboxyvinyl)-3-phosphoshikimate + phosphate. Its pathway is metabolic intermediate biosynthesis; chorismate biosynthesis; chorismate from D-erythrose 4-phosphate and phosphoenolpyruvate: step 6/7. In terms of biological role, catalyzes the transfer of the enolpyruvyl moiety of phosphoenolpyruvate (PEP) to the 5-hydroxyl of shikimate-3-phosphate (S3P) to produce enolpyruvyl shikimate-3-phosphate and inorganic phosphate. This chain is 3-phosphoshikimate 1-carboxyvinyltransferase, found in Campylobacter hominis (strain ATCC BAA-381 / DSM 21671 / CCUG 45161 / LMG 19568 / NCTC 13146 / CH001A).